Here is a 355-residue protein sequence, read N- to C-terminus: UDP-N-acetylglucosamine--N-acetylmuramyl-(pentapeptide) pyrophosphoryl-undecaprenol N-acetylglucosamine transferase (355 aa).

UDP-N-acetyl-alpha-D-glucosamine-binding positions include 15-17, Asn-127, Arg-163, Ser-191, Ile-244, 263-268, and Gln-288; these read TGG and ALTVSE.

Belongs to the glycosyltransferase 28 family. MurG subfamily.

It is found in the cell inner membrane. It catalyses the reaction di-trans,octa-cis-undecaprenyl diphospho-N-acetyl-alpha-D-muramoyl-L-alanyl-D-glutamyl-meso-2,6-diaminopimeloyl-D-alanyl-D-alanine + UDP-N-acetyl-alpha-D-glucosamine = di-trans,octa-cis-undecaprenyl diphospho-[N-acetyl-alpha-D-glucosaminyl-(1-&gt;4)]-N-acetyl-alpha-D-muramoyl-L-alanyl-D-glutamyl-meso-2,6-diaminopimeloyl-D-alanyl-D-alanine + UDP + H(+). It functions in the pathway cell wall biogenesis; peptidoglycan biosynthesis. Its function is as follows. Cell wall formation. Catalyzes the transfer of a GlcNAc subunit on undecaprenyl-pyrophosphoryl-MurNAc-pentapeptide (lipid intermediate I) to form undecaprenyl-pyrophosphoryl-MurNAc-(pentapeptide)GlcNAc (lipid intermediate II). The protein is UDP-N-acetylglucosamine--N-acetylmuramyl-(pentapeptide) pyrophosphoryl-undecaprenol N-acetylglucosamine transferase of Escherichia coli O127:H6 (strain E2348/69 / EPEC).